We begin with the raw amino-acid sequence, 92 residues long: Small ribosomal subunit protein uS19 (92 aa).

The protein belongs to the universal ribosomal protein uS19 family.

Functionally, protein S19 forms a complex with S13 that binds strongly to the 16S ribosomal RNA. The polypeptide is Small ribosomal subunit protein uS19 (Staphylococcus carnosus (strain TM300)).